A 247-amino-acid chain; its full sequence is Type III pantothenate kinase (247 aa).

Residue 6 to 13 (DVGNTSIY) coordinates ATP. Substrate is bound at residue 102-105 (GADL). The Proton acceptor role is filled by Asp-104. Residue Asp-122 participates in K(+) binding. Thr-125 is an ATP binding site. Thr-176 is a binding site for substrate.

This sequence belongs to the type III pantothenate kinase family. In terms of assembly, homodimer. The cofactor is NH4(+). It depends on K(+) as a cofactor.

It is found in the cytoplasm. It carries out the reaction (R)-pantothenate + ATP = (R)-4'-phosphopantothenate + ADP + H(+). It functions in the pathway cofactor biosynthesis; coenzyme A biosynthesis; CoA from (R)-pantothenate: step 1/5. Its function is as follows. Catalyzes the phosphorylation of pantothenate (Pan), the first step in CoA biosynthesis. This Acholeplasma laidlawii (strain PG-8A) protein is Type III pantothenate kinase.